Consider the following 394-residue polypeptide: NAD(P)H-quinone oxidoreductase subunit H (394 aa).

Belongs to the complex I 49 kDa subunit family. In terms of assembly, NDH-1 can be composed of about 15 different subunits; different subcomplexes with different compositions have been identified which probably have different functions.

Its subcellular location is the cellular thylakoid membrane. The enzyme catalyses a plastoquinone + NADH + (n+1) H(+)(in) = a plastoquinol + NAD(+) + n H(+)(out). It carries out the reaction a plastoquinone + NADPH + (n+1) H(+)(in) = a plastoquinol + NADP(+) + n H(+)(out). NDH-1 shuttles electrons from an unknown electron donor, via FMN and iron-sulfur (Fe-S) centers, to quinones in the respiratory and/or the photosynthetic chain. The immediate electron acceptor for the enzyme in this species is believed to be plastoquinone. Couples the redox reaction to proton translocation, and thus conserves the redox energy in a proton gradient. Cyanobacterial NDH-1 also plays a role in inorganic carbon-concentration. The sequence is that of NAD(P)H-quinone oxidoreductase subunit H from Prochlorococcus marinus (strain NATL1A).